Consider the following 316-residue polypeptide: Ferrochelatase (316 aa).

Fe cation-binding residues include His-186 and Glu-268.

The protein belongs to the ferrochelatase family.

The protein resides in the cytoplasm. It carries out the reaction heme b + 2 H(+) = protoporphyrin IX + Fe(2+). Its pathway is porphyrin-containing compound metabolism; protoheme biosynthesis; protoheme from protoporphyrin-IX: step 1/1. Its function is as follows. Catalyzes the ferrous insertion into protoporphyrin IX. The sequence is that of Ferrochelatase from Deinococcus radiodurans (strain ATCC 13939 / DSM 20539 / JCM 16871 / CCUG 27074 / LMG 4051 / NBRC 15346 / NCIMB 9279 / VKM B-1422 / R1).